The following is a 91-amino-acid chain: MGRSLKKGPFIADSLLRKVEKQNAADDKSVIKTWSRASTILPMMIGHTIAVHNGRTHVPVFVTEQMVGHKLGEFAPTRTFKGHIKDKKGGR.

Belongs to the universal ribosomal protein uS19 family.

Its function is as follows. Protein S19 forms a complex with S13 that binds strongly to the 16S ribosomal RNA. The chain is Small ribosomal subunit protein uS19 from Synechococcus sp. (strain CC9311).